Reading from the N-terminus, the 248-residue chain is Ras-related protein RSR1 (248 aa).

10–17 (GAGGVGKS) lines the GTP pocket. The Effector region signature appears at 32-40 (YDPTIEDSY). GTP is bound by residues 57-61 (DTAGV) and 116-119 (NKCD). Residues 182-248 (LQKQQQQQQQ…SSGSKFCTII (67 aa)) are disordered. The segment covering 184–214 (KQQQQQQQEQDAEGQQQQQKSGKSKSSATQK) has biased composition (low complexity). Composition is skewed to polar residues over residues 219-231 (DGQTDVNARLKQS) and 238-248 (SSSGSKFCTII). Residue Cys-245 is modified to Cysteine methyl ester. Cys-245 carries S-geranylgeranyl cysteine lipidation. Residues 246–248 (TII) constitute a propeptide, removed in mature form.

This sequence belongs to the small GTPase superfamily. Ras family.

The protein localises to the cell membrane. It catalyses the reaction GTP + H2O = GDP + phosphate + H(+). With respect to regulation, alternates between an inactive form bound to GDP and an active form bound to GTP. Activated by a guanine nucleotide-exchange factor (GEF) and inactivated by a GTPase-activating protein (GAP). Ras-related protein which binds GDP/GTP and possesses intrinsic GTPase activity. Involved in both yeast and hypha development. In the yeast phase, it is required for normal (polar) bud site selection and is involved in cell morphogenesis; in the yeast-mycelial transition it is involved in germ tube emergence; and in the development of the hyphae it is involved in cell elongation. This Candida albicans (Yeast) protein is Ras-related protein RSR1 (RSR1).